Here is a 258-residue protein sequence, read N- to C-terminus: MLRLALTGVTGRMGRAVLELAASAPDIQLVCGLIRPARDPHEVAAQLPAPLALTSRVAELVQGADVVVDFSHPAVTVAVAEAAAHAGIPLVSGTTGLSEHDQAVILRAAQHVPVVQAANFSLGIALLHWLLPELVARLPTWDVELIERHHRHKRDAPSGTALALARTLLAAREPAPSPLVYGRGPGTAPRQPGEVGIHAVRAGGEVGRHTVLLATDDEAIEVTHWVQSRRAYAQGALEAARRLIGRPPGLYSLQDLVT.

NAD(+) is bound by residues 8–13 (GVTGRM), 93–95 (GTT), and 117–120 (AANF). Histidine 149 serves as the catalytic Proton donor/acceptor. Residue histidine 150 coordinates (S)-2,3,4,5-tetrahydrodipicolinate. The Proton donor role is filled by lysine 153. 159-160 (GT) provides a ligand contact to (S)-2,3,4,5-tetrahydrodipicolinate.

The protein belongs to the DapB family.

Its subcellular location is the cytoplasm. It carries out the reaction (S)-2,3,4,5-tetrahydrodipicolinate + NAD(+) + H2O = (2S,4S)-4-hydroxy-2,3,4,5-tetrahydrodipicolinate + NADH + H(+). The catalysed reaction is (S)-2,3,4,5-tetrahydrodipicolinate + NADP(+) + H2O = (2S,4S)-4-hydroxy-2,3,4,5-tetrahydrodipicolinate + NADPH + H(+). Its pathway is amino-acid biosynthesis; L-lysine biosynthesis via DAP pathway; (S)-tetrahydrodipicolinate from L-aspartate: step 4/4. Its function is as follows. Catalyzes the conversion of 4-hydroxy-tetrahydrodipicolinate (HTPA) to tetrahydrodipicolinate. This is 4-hydroxy-tetrahydrodipicolinate reductase from Thermomicrobium roseum (strain ATCC 27502 / DSM 5159 / P-2).